Consider the following 319-residue polypeptide: HTH-type transcriptional regulator YidZ (319 aa).

In terms of domain architecture, HTH lysR-type spans 8-65 (LDLNLLLCLQLLMQERSVTKAAKRMNVTPSAVSKSLSKLRTWFDDPLFVNTPLGLTPT). The H-T-H motif DNA-binding region spans 25–44 (VTKAAKRMNVTPSAVSKSLS).

It belongs to the LysR transcriptional regulatory family.

Involved in anaerobic NO protection. This Citrobacter koseri (strain ATCC BAA-895 / CDC 4225-83 / SGSC4696) protein is HTH-type transcriptional regulator YidZ.